Reading from the N-terminus, the 656-residue chain is tRNA(Met) cytidine acetyltransferase TmcA (656 aa).

Residues glutamine 145, 167–176, and arginine 291 contribute to the ATP site; that span reads GRGKSALLGM. Positions 368–542 constitute an N-acetyltransferase domain; that stretch reads SEGKYNRQFF…SGCYSAIALK (175 aa). Acetyl-CoA is bound by residues 474–476, 481–487, and glutamate 510; these read IAV and QQKGIGQ.

Belongs to the RNA cytidine acetyltransferase family. TmcA subfamily.

It is found in the cytoplasm. It carries out the reaction cytidine(34) in elongator tRNA(Met) + acetyl-CoA + ATP + H2O = N(4)-acetylcytidine(34) in elongator tRNA(Met) + ADP + phosphate + CoA + H(+). Functionally, catalyzes the formation of N(4)-acetylcytidine (ac(4)C) at the wobble position of tRNA(Met), by using acetyl-CoA as an acetyl donor and ATP (or GTP). This is tRNA(Met) cytidine acetyltransferase TmcA from Haemophilus influenzae (strain ATCC 51907 / DSM 11121 / KW20 / Rd).